We begin with the raw amino-acid sequence, 240 residues long: Uridylate kinase (240 aa).

ATP is bound at residue 14–17 (KLSG). Gly56 is a binding site for UMP. Residues Gly57 and Arg61 each coordinate ATP. Residues Asp76 and 137 to 144 (TGNPFFTT) each bind UMP. Residues Thr164, Tyr170, and Asp173 each contribute to the ATP site.

It belongs to the UMP kinase family. Homohexamer.

The protein localises to the cytoplasm. It carries out the reaction UMP + ATP = UDP + ADP. It functions in the pathway pyrimidine metabolism; CTP biosynthesis via de novo pathway; UDP from UMP (UMPK route): step 1/1. Its activity is regulated as follows. Inhibited by UTP. Catalyzes the reversible phosphorylation of UMP to UDP. This is Uridylate kinase from Acidovorax sp. (strain JS42).